A 444-amino-acid polypeptide reads, in one-letter code: Xylose isomerase (444 aa).

Catalysis depends on residues histidine 101 and aspartate 104. The Mg(2+) site is built by glutamate 232, glutamate 268, histidine 271, aspartate 296, aspartate 307, aspartate 309, and aspartate 339.

This sequence belongs to the xylose isomerase family. In terms of assembly, homotetramer. Mg(2+) serves as cofactor.

It is found in the cytoplasm. It catalyses the reaction alpha-D-xylose = alpha-D-xylulofuranose. The sequence is that of Xylose isomerase from Thermotoga maritima (strain ATCC 43589 / DSM 3109 / JCM 10099 / NBRC 100826 / MSB8).